Reading from the N-terminus, the 431-residue chain is Peptidase B (431 aa).

K196 and D201 together coordinate Mn(2+). Residue K208 is part of the active site. Mn(2+)-binding residues include D219, D278, and E280. The active site involves R282.

The protein belongs to the peptidase M17 family. As to quaternary structure, homohexamer. Requires Mn(2+) as cofactor.

The protein resides in the cytoplasm. It carries out the reaction Release of an N-terminal amino acid, Xaa, from a peptide or arylamide. Xaa is preferably Glu or Asp but may be other amino acids, including Leu, Met, His, Cys and Gln.. Functionally, probably plays an important role in intracellular peptide degradation. This Vibrio atlanticus (strain LGP32) (Vibrio splendidus (strain Mel32)) protein is Peptidase B.